The chain runs to 160 residues: Endoribonuclease YbeY (160 aa).

Residues His-112, His-116, and His-122 each contribute to the Zn(2+) site.

It belongs to the endoribonuclease YbeY family. It depends on Zn(2+) as a cofactor.

The protein resides in the cytoplasm. Functionally, single strand-specific metallo-endoribonuclease involved in late-stage 70S ribosome quality control and in maturation of the 3' terminus of the 16S rRNA. The sequence is that of Endoribonuclease YbeY from Maricaulis maris (strain MCS10) (Caulobacter maris).